Consider the following 388-residue polypeptide: Mannitol-1-phosphate 5-dehydrogenase (388 aa).

4–15 serves as a coordination point for NAD(+); it reads AVHFGAGNIGRG.

This sequence belongs to the mannitol dehydrogenase family.

The enzyme catalyses D-mannitol 1-phosphate + NAD(+) = beta-D-fructose 6-phosphate + NADH + H(+). The sequence is that of Mannitol-1-phosphate 5-dehydrogenase from Thermoanaerobacter pseudethanolicus (strain ATCC 33223 / 39E) (Clostridium thermohydrosulfuricum).